The sequence spans 228 residues: Octanoyltransferase (228 aa).

A BPL/LPL catalytic domain is found at 31–212 (EETDGILILL…KFEEVFEIKF (182 aa)). Substrate contacts are provided by residues 76–83 (RGGKITFH), 143–145 (AIG), and 156–158 (GIA). The active-site Acyl-thioester intermediate is the cysteine 174.

Belongs to the LipB family.

It localises to the cytoplasm. The enzyme catalyses octanoyl-[ACP] + L-lysyl-[protein] = N(6)-octanoyl-L-lysyl-[protein] + holo-[ACP] + H(+). Its pathway is protein modification; protein lipoylation via endogenous pathway; protein N(6)-(lipoyl)lysine from octanoyl-[acyl-carrier-protein]: step 1/2. In terms of biological role, catalyzes the transfer of endogenously produced octanoic acid from octanoyl-acyl-carrier-protein onto the lipoyl domains of lipoate-dependent enzymes. Lipoyl-ACP can also act as a substrate although octanoyl-ACP is likely to be the physiological substrate. The protein is Octanoyltransferase of Caldanaerobacter subterraneus subsp. tengcongensis (strain DSM 15242 / JCM 11007 / NBRC 100824 / MB4) (Thermoanaerobacter tengcongensis).